The primary structure comprises 172 residues: Adenine phosphoribosyltransferase (172 aa).

It belongs to the purine/pyrimidine phosphoribosyltransferase family. Homodimer.

The protein localises to the cytoplasm. The enzyme catalyses AMP + diphosphate = 5-phospho-alpha-D-ribose 1-diphosphate + adenine. It functions in the pathway purine metabolism; AMP biosynthesis via salvage pathway; AMP from adenine: step 1/1. Functionally, catalyzes a salvage reaction resulting in the formation of AMP, that is energically less costly than de novo synthesis. The sequence is that of Adenine phosphoribosyltransferase from Clostridium tetani (strain Massachusetts / E88).